A 298-amino-acid polypeptide reads, in one-letter code: Protease HtpX homolog (298 aa).

Helical transmembrane passes span 15–35 and 38–58; these read LIMV…GYLF and SPWT…LIMW. His-143 contacts Zn(2+). Glu-144 is an active-site residue. Residue His-147 participates in Zn(2+) binding. 2 helical membrane passes run 153-173 and 197-217; these read ILLS…SGIA and IIFK…SASL. Glu-227 lines the Zn(2+) pocket.

Belongs to the peptidase M48B family. Zn(2+) serves as cofactor.

It localises to the cell membrane. The sequence is that of Protease HtpX homolog from Lactobacillus acidophilus (strain ATCC 700396 / NCK56 / N2 / NCFM).